An 810-amino-acid polypeptide reads, in one-letter code: Hemoglobin-haptoglobin utilization protein B (810 aa).

The N-terminal stretch at 1-22 (MPIPFKPVLAAAAIAQAFPAFA) is a signal peptide. In terms of domain architecture, TBDR plug spans 34–166 (NEITVTGTHK…LGGAVNYQTK (133 aa)). The 636-residue stretch at 175-810 (DKPYHLGIKG…SYNFTIEAKF (636 aa)) folds into the TBDR beta-barrel domain. A TonB C-terminal box motif is present at residues 793–810 (QRFTSPGRSYNFTIEAKF).

This sequence belongs to the TonB-dependent receptor family.

It is found in the cell outer membrane. Functionally, acts as a receptor for hemoglobin or the hemoglobin/haptoglobin complex and is required for heme uptake. This Neisseria meningitidis serogroup A / serotype 4A (strain DSM 15465 / Z2491) protein is Hemoglobin-haptoglobin utilization protein B (hpuB).